Reading from the N-terminus, the 376-residue chain is MQCALYDAGRCRSCQWITQSVNEQLSAKTADLHRLLAGLPVEQWCAPISGPEQHFRNKAKMVVSGSVEKPLFGMLHRDGTPVDLCACPLYPASFAPVFSTLKPFIARAGLTPYNVARKRGELKYLLLTESQFDGGMMLRFVLRSETKLTQLRAALPWLRAQLPQLRVITANIQPVHMAIMEGETEIYLTDQQALAERFNDVPLWIRPQSFFQTNPTVASRLYATARDWVGQLPVRHMWDLFCGVGGFGLHCATPQMQLTGIEIAPEAIACAKQSAAELGLTRLHFQALDSTQFAIAQGETPDLVLVNPPRRGIGKPLCDYLAQMAPRFIIYSSCNAQTMAQDIRHLPNYRIQRVQLFDMFPHTAHYEVLTLLRRSI.

Residues Cys-3, Cys-11, Cys-14, and Cys-87 each contribute to the [4Fe-4S] cluster site. Residues Gln-212, Phe-241, Glu-262, and Asn-307 each contribute to the S-adenosyl-L-methionine site. The active-site Nucleophile is Cys-334.

This sequence belongs to the class I-like SAM-binding methyltransferase superfamily. RNA M5U methyltransferase family. RlmC subfamily.

It carries out the reaction uridine(747) in 23S rRNA + S-adenosyl-L-methionine = 5-methyluridine(747) in 23S rRNA + S-adenosyl-L-homocysteine + H(+). In terms of biological role, catalyzes the formation of 5-methyl-uridine at position 747 (m5U747) in 23S rRNA. The polypeptide is 23S rRNA (uracil(747)-C(5))-methyltransferase RlmC (Salmonella newport (strain SL254)).